The primary structure comprises 307 residues: Aspartate carbamoyltransferase catalytic subunit (307 aa).

Carbamoyl phosphate is bound by residues Arg-59 and Thr-60. Residue Lys-87 coordinates L-aspartate. Positions 109, 137, and 140 each coordinate carbamoyl phosphate. The L-aspartate site is built by Arg-173 and Arg-223. 2 residues coordinate carbamoyl phosphate: Gly-266 and Pro-267.

This sequence belongs to the aspartate/ornithine carbamoyltransferase superfamily. ATCase family. Heterododecamer (2C3:3R2) of six catalytic PyrB chains organized as two trimers (C3), and six regulatory PyrI chains organized as three dimers (R2).

It catalyses the reaction carbamoyl phosphate + L-aspartate = N-carbamoyl-L-aspartate + phosphate + H(+). It functions in the pathway pyrimidine metabolism; UMP biosynthesis via de novo pathway; (S)-dihydroorotate from bicarbonate: step 2/3. Functionally, catalyzes the condensation of carbamoyl phosphate and aspartate to form carbamoyl aspartate and inorganic phosphate, the committed step in the de novo pyrimidine nucleotide biosynthesis pathway. The protein is Aspartate carbamoyltransferase catalytic subunit of Helicobacter pylori (strain Shi470).